The sequence spans 342 residues: Succinylglutamate desuccinylase (342 aa).

Residues His-63, Glu-66, and His-155 each contribute to the Zn(2+) site. Glu-219 is an active-site residue.

This sequence belongs to the AspA/AstE family. Succinylglutamate desuccinylase subfamily. Requires Zn(2+) as cofactor.

It carries out the reaction N-succinyl-L-glutamate + H2O = L-glutamate + succinate. The protein operates within amino-acid degradation; L-arginine degradation via AST pathway; L-glutamate and succinate from L-arginine: step 5/5. In terms of biological role, transforms N(2)-succinylglutamate into succinate and glutamate. This chain is Succinylglutamate desuccinylase, found in Vibrio vulnificus (strain CMCP6).